The chain runs to 438 residues: MQVTLEKKEGIHCSLLIEVPANEIDSVVSKEINRTAKTIKMDGFRPGKVPAGMVKKKYGEQIRMEVISDLIPQKYSKAIQDEKLAVAGIEVELKENKEGQPLKFVANLELFPEFEVTGFEKIEVQKPVVELTDKEVKQMIDNLRKQFATFSEVYKVVEKDDKVTIDFVGKKDGEAFEGGTANDIDVIIGSGQMIPGFEDGIIGMKKGEQKTITVTFPQDYQNKDLAGAETTFDITVKKIQQAELPEVNDEFVKKFGVKGGVDTFENEIKENMQRELKFILQRKVKDQVFKGLREIAKFETPKSLIKREIDAAKQNLLKQMGGAKGFDVNQLPDNLFEANAKQKVETSLILDSIMNSQEFKAEEAEVESLLDELVQAYEEPEKTKEQIKKNDKEIANLKALVIENKLTDWVLEQAKVTEKTEDFFEVIKENMQAQQAGF.

Residues 160–245 (DDKVTIDFVG…VKKIQQAELP (86 aa)) form the PPIase FKBP-type domain.

The protein belongs to the FKBP-type PPIase family. Tig subfamily.

Its subcellular location is the cytoplasm. The enzyme catalyses [protein]-peptidylproline (omega=180) = [protein]-peptidylproline (omega=0). In terms of biological role, involved in protein export. Acts as a chaperone by maintaining the newly synthesized protein in an open conformation. Functions as a peptidyl-prolyl cis-trans isomerase. The protein is Trigger factor of Francisella tularensis subsp. holarctica (strain LVS).